The following is a 79-amino-acid chain: Sec-independent protein translocase protein TatA (79 aa).

The helical transmembrane segment at 1-21 (MGSLSIWHWIVVIAVVLLLFG) threads the bilayer. Basic and acidic residues predominate over residues 42–60 (GLQDDEKTAEKPDAVKSLD). The interval 42–79 (GLQDDEKTAEKPDAVKSLDHNATTGTPPNRTDVGSKAV) is disordered. The segment covering 61-70 (HNATTGTPPN) has biased composition (polar residues).

The protein belongs to the TatA/E family. The Tat system comprises two distinct complexes: a TatABC complex, containing multiple copies of TatA, TatB and TatC subunits, and a separate TatA complex, containing only TatA subunits. Substrates initially bind to the TatABC complex, which probably triggers association of the separate TatA complex to form the active translocon.

The protein resides in the cell inner membrane. Functionally, part of the twin-arginine translocation (Tat) system that transports large folded proteins containing a characteristic twin-arginine motif in their signal peptide across membranes. TatA could form the protein-conducting channel of the Tat system. The chain is Sec-independent protein translocase protein TatA from Rhodopseudomonas palustris (strain HaA2).